The sequence spans 67 residues: Ferredoxin FdxE (67 aa).

Residues cysteine 10, valine 11, glutamine 15, cysteine 16, and cysteine 54 each coordinate [3Fe-4S] cluster.

In terms of assembly, interacts with the cytochrome P450 143 with high affinity (Kd=84 nM). It depends on [3Fe-4S] cluster as a cofactor.

Ferredoxin that is the redox partner of cytochrome CYP143, a cytochrome P450 encoded by an adjacent gene. In Mycobacterium tuberculosis (strain ATCC 25618 / H37Rv), this protein is Ferredoxin FdxE.